Consider the following 120-residue polypeptide: Small ribosomal subunit protein uS13 (120 aa).

The tract at residues 96–120 (PCRGQRTRTNARTRKGPRKAIAGKK) is disordered.

Belongs to the universal ribosomal protein uS13 family. In terms of assembly, part of the 30S ribosomal subunit. Forms a loose heterodimer with protein S19. Forms two bridges to the 50S subunit in the 70S ribosome.

Functionally, located at the top of the head of the 30S subunit, it contacts several helices of the 16S rRNA. In the 70S ribosome it contacts the 23S rRNA (bridge B1a) and protein L5 of the 50S subunit (bridge B1b), connecting the 2 subunits; these bridges are implicated in subunit movement. Contacts the tRNAs in the A and P-sites. This chain is Small ribosomal subunit protein uS13, found in Chromobacterium violaceum (strain ATCC 12472 / DSM 30191 / JCM 1249 / CCUG 213 / NBRC 12614 / NCIMB 9131 / NCTC 9757 / MK).